The sequence spans 350 residues: Purine-rich element-binding protein gamma (350 aa).

Disordered regions lie at residues 1–59 (MERA…GTSE) and 136–172 (GHRQEHGQSKEQVSRRRQKHSAPSPPVSVGSEEHPHS). Residues 9–27 (GGGSGGGRGRGGKNVGGPG) are compositionally biased toward gly residues. Residues 47-59 (ASATPNQSGGTSE) are compositionally biased toward polar residues. The DNA-binding element occupies 54 to 296 (SGGTSEIQEL…GIFLKVSEVR (243 aa)). Basic and acidic residues predominate over residues 137-149 (HRQEHGQSKEQVS). 3 positions are modified to phosphoserine: Ser-163, Ser-166, and Ser-342.

It belongs to the PUR DNA-binding protein family. As to expression, isoform 1 is expressed in testis. Isoform 2 is expressed in blastocyst and kidney.

The protein localises to the nucleus. In Mus musculus (Mouse), this protein is Purine-rich element-binding protein gamma (Purg).